Consider the following 246-residue polypeptide: UPF0246 protein stu1967 (246 aa).

Belongs to the UPF0246 family.

The protein is UPF0246 protein stu1967 of Streptococcus thermophilus (strain ATCC BAA-250 / LMG 18311).